The chain runs to 117 residues: Fluoride-specific ion channel FluC 2 (117 aa).

2 helical membrane passes run 1-21 (MISI…RSAI) and 46-66 (FLIG…AFFV). Na(+) is bound by residues Gly71 and Thr74. Residues 95-115 (LFLNYSLLQFIIGFIACYIGY) form a helical membrane-spanning segment.

It belongs to the fluoride channel Fluc/FEX (TC 1.A.43) family.

It localises to the cell membrane. It catalyses the reaction fluoride(in) = fluoride(out). Its activity is regulated as follows. Na(+) is not transported, but it plays an essential structural role and its presence is essential for fluoride channel function. Functionally, fluoride-specific ion channel. Important for reducing fluoride concentration in the cell, thus reducing its toxicity. In Staphylococcus aureus (strain Mu50 / ATCC 700699), this protein is Fluoride-specific ion channel FluC 2.